Consider the following 311-residue polypeptide: Probable 5-dehydro-4-deoxyglucarate dehydratase (311 aa).

Belongs to the DapA family.

The catalysed reaction is 5-dehydro-4-deoxy-D-glucarate + H(+) = 2,5-dioxopentanoate + CO2 + H2O. Its pathway is carbohydrate acid metabolism; D-glucarate degradation; 2,5-dioxopentanoate from D-glucarate: step 2/2. This is Probable 5-dehydro-4-deoxyglucarate dehydratase from Ralstonia nicotianae (strain ATCC BAA-1114 / GMI1000) (Ralstonia solanacearum).